A 359-amino-acid chain; its full sequence is Type-1 angiotensin II receptor (359 aa).

The Extracellular portion of the chain corresponds to 1 to 25 (MILNSSTEDGIKRIQDDCPKAGRHN). Residue N4 is glycosylated (N-linked (GlcNAc...) asparagine). Angiotensin II contacts are provided by Q15 and D17. Disulfide bonds link C18-C274 and C101-C180. A helical membrane pass occupies residues 26–55 (YIFIMIPTLYSIIFVVGLFGNSLVVIVIYF). Over 56 to 61 (YMKLKT) the chain is Cytoplasmic. A helical transmembrane segment spans residues 62-89 (VASVFLLNLALADLCFLLTLPLWAVYTA). At 90 to 98 (MEYRWPFGN) the chain is on the extracellular side. A helical membrane pass occupies residues 99 to 125 (YLCKIASGSVSFNLYASVFLLTCLSID). The Cytoplasmic portion of the chain corresponds to 126–141 (RYLAIVHPMKSRLRRT). The chain crosses the membrane as a helical span at residues 142–165 (MLVAKVTCIIIWLLAGLASLPTII). Topologically, residues 166–190 (HRNVFFIENTNITVCAFHYESQNST) are extracellular. R167 provides a ligand contact to angiotensin II. Residue N176 is glycosylated (N-linked (GlcNAc...) asparagine). 3 residues coordinate angiotensin II: F182, H183, and Y184. N-linked (GlcNAc...) asparagine glycosylation occurs at N188. The chain crosses the membrane as a helical span at residues 191 to 216 (LPVGLGLTKNILGFLFPFLIILTSYT). K199 is a binding site for angiotensin II. The Cytoplasmic segment spans residues 217-239 (LIWKTLKKAYEIQKNKPRKDDIF). Residues 240–268 (KIILAIVLFFFFSWVPHQIFTFMDVLIQL) form a helical membrane-spanning segment. Residues 269-278 (GLIRDCKIED) lie on the Extracellular side of the membrane. Residues 279–304 (IVDTAMPITICLAYFNNCLNPPFYGF) traverse the membrane as a helical segment. At 305–359 (LGKKFKKYFLQLLKYIPPKAKSHSNLSTKMSTLSYRPSENGNSSTKKPAPCTEVE) the chain is on the cytoplasmic side. Residues 335 to 350 (STLSYRPSENGNSSTK) are compositionally biased toward polar residues. Residues 335–359 (STLSYRPSENGNSSTKKPAPCTEVE) are disordered. Residue C355 is the site of S-palmitoyl cysteine attachment.

The protein belongs to the G-protein coupled receptor 1 family. Interacts with MAS1. Interacts with ARRB1. Interacts with FLNA (via filamin repeat 21); increases PKA-mediated phosphorylation of FLNA. In terms of processing, C-terminal Ser or Thr residues may be phosphorylated.

The protein localises to the cell membrane. Functionally, receptor for angiotensin II, a vasoconstricting peptide, which acts as a key regulator of blood pressure and sodium retention by the kidney. The activated receptor in turn couples to G-alpha proteins G(q) (GNAQ, GNA11, GNA14 or GNA15) and thus activates phospholipase C and increases the cytosolic Ca(2+) concentrations, which in turn triggers cellular responses such as stimulation of protein kinase C. The polypeptide is Type-1 angiotensin II receptor (AGTR1) (Ovis aries (Sheep)).